Here is a 142-residue protein sequence, read N- to C-terminus: Transcription antitermination protein NusB (142 aa).

This sequence belongs to the NusB family.

Functionally, involved in transcription antitermination. Required for transcription of ribosomal RNA (rRNA) genes. Binds specifically to the boxA antiterminator sequence of the ribosomal RNA (rrn) operons. The polypeptide is Transcription antitermination protein NusB (Roseiflexus castenholzii (strain DSM 13941 / HLO8)).